Reading from the N-terminus, the 251-residue chain is Cell division protein ZapD (251 aa).

Belongs to the ZapD family. Interacts with FtsZ.

It is found in the cytoplasm. In terms of biological role, cell division factor that enhances FtsZ-ring assembly. Directly interacts with FtsZ and promotes bundling of FtsZ protofilaments, with a reduction in FtsZ GTPase activity. This chain is Cell division protein ZapD, found in Burkholderia ambifaria (strain MC40-6).